A 676-amino-acid chain; its full sequence is RNA helicase NPH-II (676 aa).

The region spanning 172–347 (FSAWISHRPV…VFLPNPAFIH (176 aa)) is the Helicase ATP-binding domain. ATP is bound at residue 185–192 (GGTGVGKT). The DEXH box motif lies at 296–299 (DEVH). One can recognise a Helicase C-terminal domain in the interval 366–535 (NPSSRMAYIE…NYILYANKFN (170 aa)).

The protein belongs to the DEAD box helicase family. DEAH subfamily. As to quaternary structure, monomer.

The protein localises to the virion. The catalysed reaction is ATP + H2O = ADP + phosphate + H(+). Functionally, NTP-dependent helicase that catalyzes unidirectional unwinding of 3'tailed duplex RNAs and plays an important role during transcription of early mRNAs, presumably by preventing R-loop formation behind the elongating RNA polymerase. Might also play a role in the export of newly synthesized mRNA chains out of the core into the cytoplasm. Required for replication and propagation of viral particles. In Homo sapiens (Human), this protein is RNA helicase NPH-II (OPG084).